The following is a 147-amino-acid chain: Transcriptional repressor NrdR (147 aa).

The segment at 3–34 (CPFCGHLETQVVETRVSEDADFVRRRRQCSAC) is a zinc-finger region. Residues 49-139 (PVVVKKDGSR…VYRSFEDVDE (91 aa)) enclose the ATP-cone domain.

The protein belongs to the NrdR family. Zn(2+) is required as a cofactor.

Its function is as follows. Negatively regulates transcription of bacterial ribonucleotide reductase nrd genes and operons by binding to NrdR-boxes. In Variovorax paradoxus (strain S110), this protein is Transcriptional repressor NrdR.